Consider the following 193-residue polypeptide: Small ribosomal subunit protein eS1 (193 aa).

The protein belongs to the eukaryotic ribosomal protein eS1 family.

The polypeptide is Small ribosomal subunit protein eS1 (Methanobrevibacter smithii (strain ATCC 35061 / DSM 861 / OCM 144 / PS)).